The chain runs to 440 residues: Doublesex- and mab-3-related transcription factor A2 (440 aa).

A DNA-binding region (DM) is located at residues Cys59–Arg106. The segment at Pro167–Met261 is disordered. Over residues Asp199–Ser213 the composition is skewed to basic and acidic residues. The segment covering Thr229–Gly241 has biased composition (low complexity). Positions Pro251–Met261 are enriched in polar residues. Residues Met261–Gln296 form the DMA domain.

The protein belongs to the DMRT family. As to expression, restrictively expressed in brain and developing germ cells, especially in spermatogonia, spermatocytes, spermatids, and sperm cells, and in developing oocytes, including early perinucleolus stage oocyte, late yolk vesicle stage oocyte, and oil drop stage oocyte.

It is found in the nucleus. Functionally, may be involved in sexual development. The protein is Doublesex- and mab-3-related transcription factor A2 (dmrta2) of Danio rerio (Zebrafish).